A 494-amino-acid polypeptide reads, in one-letter code: 3-octaprenyl-4-hydroxybenzoate carboxy-lyase (494 aa).

Asparagine 172 is a binding site for Mn(2+). Residues 175–177, 189–191, and 194–195 contribute to the prenylated FMN site; these read IYR, RWL, and RG. Mn(2+) is bound at residue glutamate 238. The active-site Proton donor is the aspartate 287.

The protein belongs to the UbiD family. Homohexamer. Requires prenylated FMN as cofactor. The cofactor is Mn(2+).

It is found in the cell membrane. The enzyme catalyses a 4-hydroxy-3-(all-trans-polyprenyl)benzoate + H(+) = a 2-(all-trans-polyprenyl)phenol + CO2. Its pathway is cofactor biosynthesis; ubiquinone biosynthesis. Its function is as follows. Catalyzes the decarboxylation of 3-octaprenyl-4-hydroxy benzoate to 2-octaprenylphenol, an intermediate step in ubiquinone biosynthesis. The chain is 3-octaprenyl-4-hydroxybenzoate carboxy-lyase from Citrobacter koseri (strain ATCC BAA-895 / CDC 4225-83 / SGSC4696).